Consider the following 448-residue polypeptide: Probable glycine dehydrogenase (decarboxylating) subunit 1 (448 aa).

Belongs to the GcvP family. N-terminal subunit subfamily. As to quaternary structure, the glycine cleavage system is composed of four proteins: P, T, L and H. In this organism, the P 'protein' is a heterodimer of two subunits.

The catalysed reaction is N(6)-[(R)-lipoyl]-L-lysyl-[glycine-cleavage complex H protein] + glycine + H(+) = N(6)-[(R)-S(8)-aminomethyldihydrolipoyl]-L-lysyl-[glycine-cleavage complex H protein] + CO2. The glycine cleavage system catalyzes the degradation of glycine. The P protein binds the alpha-amino group of glycine through its pyridoxal phosphate cofactor; CO(2) is released and the remaining methylamine moiety is then transferred to the lipoamide cofactor of the H protein. The sequence is that of Probable glycine dehydrogenase (decarboxylating) subunit 1 from Staphylococcus aureus (strain COL).